A 197-amino-acid chain; its full sequence is Auxin-responsive protein IAA31 (197 aa).

2 disordered regions span residues 1 to 43 (MENL…DQAK) and 66 to 90 (SCLQ…ETQQ). Positions 9-13 (LRLGL) match the EAR-like (transcriptional repression) motif. A PB1 domain is found at 99 to 186 (GLFVKVSMDG…TCKRLRIMKG (88 aa)).

This sequence belongs to the Aux/IAA family. Homodimers and heterodimers. Highly expressed in etiolated seedlings. Expressed in roots.

It localises to the nucleus. In terms of biological role, aux/IAA proteins are short-lived transcriptional factors that function as repressors of early auxin response genes at low auxin concentrations. The chain is Auxin-responsive protein IAA31 (IAA31) from Oryza sativa subsp. japonica (Rice).